We begin with the raw amino-acid sequence, 189 residues long: TATA-box-binding protein 1 (189 aa).

2 consecutive repeat copies span residues 10-86 (IENV…FDKL) and 101-179 (VQNI…ISRL).

The protein belongs to the TBP family.

Its function is as follows. General factor that plays a role in the activation of archaeal genes transcribed by RNA polymerase. Binds specifically to the TATA box promoter element which lies close to the position of transcription initiation. The protein is TATA-box-binding protein 1 (tbp1) of Haloferax volcanii (strain ATCC 29605 / DSM 3757 / JCM 8879 / NBRC 14742 / NCIMB 2012 / VKM B-1768 / DS2) (Halobacterium volcanii).